We begin with the raw amino-acid sequence, 467 residues long: Sialic acid-binding Ig-like lectin 7 (467 aa).

The first 18 residues, 1 to 18 (MLLLLLLPLLWGRERVEG), serve as a signal peptide directing secretion. The Extracellular portion of the chain corresponds to 19–353 (QKSNRKDYSL…KMRPVSGVLL (335 aa)). Positions 39-122 (GMCVHVRCSF…ARMSDAGRYF (84 aa)) constitute an Ig-like V-type domain. Residues C46 and C106 are joined by a disulfide bond. The N-linked (GlcNAc...) asparagine glycan is linked to N105. N-acetylneuraminate is bound by residues R124 and 131-135 (KWNYK). N-linked (GlcNAc...) asparagine glycans are attached at residues N142 and N165. Positions 150–233 (PNILIPGTLE…AGVTTNRTIQ (84 aa)) constitute an Ig-like C2-type 1 domain. C168 and C217 are joined by a disulfide. 4 N-linked (GlcNAc...) asparagine glycosylation sites follow: N229, N235, N242, and N260. Positions 240–336 (PQNLTVTVFQ…GSQHVSLNLS (97 aa)) constitute an Ig-like C2-type 2 domain. Cysteines 276 and 320 form a disulfide. N-linked (GlcNAc...) asparagine glycosylation occurs at N334. The helical transmembrane segment at 354-376 (GAVGGAGATALVFLSFCVIFIVV) threads the bilayer. At 377–467 (RSCRKKSARP…NEYSEIKIPK (91 aa)) the chain is on the cytoplasmic side. Polar residues predominate over residues 401-412 (IRGSASQGNLTE). The interval 401-431 (IRGSASQGNLTESWADDNPRHHGLAAHSSGE) is disordered. S429 is modified (phosphoserine). Positions 435–440 (IQYAPL) match the ITIM motif motif. The disordered stretch occupies residues 443-467 (HKGEPQDLSGQEATNNEYSEIKIPK). The span at 450–460 (LSGQEATNNEY) shows a compositional bias: polar residues.

The protein belongs to the immunoglobulin superfamily. SIGLEC (sialic acid binding Ig-like lectin) family. Interacts with PTPN6/SHP-1 upon phosphorylation. Tyrosine phosphorylated. In terms of tissue distribution, predominantly expressed by resting and activated natural killer cells and at lower levels by granulocytes and monocytes. High expression found in placenta, liver, lung, spleen, and peripheral blood leukocytes.

Its subcellular location is the membrane. Its function is as follows. Putative adhesion molecule that mediates sialic-acid dependent binding to cells. Preferentially binds to alpha-2,3- and alpha-2,6-linked sialic acid. Also binds disialogangliosides (disialogalactosyl globoside, disialyl lactotetraosylceramide and disialyl GalNAc lactotetraoslylceramide). The sialic acid recognition site may be masked by cis interactions with sialic acids on the same cell surface. In the immune response, may act as an inhibitory receptor upon ligand induced tyrosine phosphorylation by recruiting cytoplasmic phosphatase(s) via their SH2 domain(s) that block signal transduction through dephosphorylation of signaling molecules. Mediates inhibition of natural killer cells cytotoxicity. May play a role in hemopoiesis. Inhibits differentiation of CD34+ cell precursors towards myelomonocytic cell lineage and proliferation of leukemic myeloid cells (in vitro). The protein is Sialic acid-binding Ig-like lectin 7 (SIGLEC7) of Homo sapiens (Human).